The sequence spans 373 residues: Securin (373 aa).

Positions 1–10 (MMPANEDKEN) are enriched in basic and acidic residues. Residues 1 to 27 (MMPANEDKENNIVYTGNESSGINFPQT) form a disordered region. The segment covering 12–26 (IVYTGNESSGINFPQ) has biased composition (polar residues). A D-box motif is present at residues 85 to 88 (RLPL). Positions 177–278 (ADSGKNEESS…LPYVPEGYSP (102 aa)) are disordered. A phosphoserine mark is found at Ser-185, Ser-186, Ser-212, and Ser-213. The segment covering 185-194 (SSDDDEGNED) has biased composition (acidic residues). The segment covering 225–235 (LFNEQGGLQQL) has biased composition (low complexity). Residues 240–256 (TKNEQKTKNDKSDKTDD) are compositionally biased toward basic and acidic residues. The residue at position 277 (Ser-277) is a Phosphoserine. Ser-292 carries the phosphoserine; by CDC28 modification.

It belongs to the securin family. Interacts with the caspase-like ESP1, and prevents its protease activity probably by covering its active site. Interacts with CDC20. In terms of processing, phosphorylated by CDC28. The phosphorylation may be important for ESP1 localization to the nucleus. Ubiquitinated by the anaphase promoting complex (APC) at the onset of anaphase, conducting to its degradation.

It localises to the cytoplasm. Its subcellular location is the nucleus. Regulatory protein, which plays a central role in chromosome stability. Probably acts by blocking the action of key proteins. During the mitosis, it blocks Separase/ESP1 function, preventing the proteolysis of the cohesin complex and the subsequent segregation of the chromosomes. At the onset of anaphase, it is ubiquitinated, conducting to its destruction and to the liberation of ESP1. The chain is Securin (PDS1) from Saccharomyces cerevisiae (strain ATCC 204508 / S288c) (Baker's yeast).